A 257-amino-acid polypeptide reads, in one-letter code: Type III pantothenate kinase (257 aa).

Asp-6–Val-13 provides a ligand contact to ATP. Residue Gly-107–Arg-110 coordinates substrate. The active-site Proton acceptor is the Asp-109. A K(+)-binding site is contributed by Asp-129. Residue Thr-132 coordinates ATP. Residue Thr-184 participates in substrate binding.

The protein belongs to the type III pantothenate kinase family. As to quaternary structure, homodimer. NH4(+) is required as a cofactor. Requires K(+) as cofactor.

The protein localises to the cytoplasm. It catalyses the reaction (R)-pantothenate + ATP = (R)-4'-phosphopantothenate + ADP + H(+). The protein operates within cofactor biosynthesis; coenzyme A biosynthesis; CoA from (R)-pantothenate: step 1/5. Its function is as follows. Catalyzes the phosphorylation of pantothenate (Pan), the first step in CoA biosynthesis. The chain is Type III pantothenate kinase from Cereibacter sphaeroides (strain ATCC 17029 / ATH 2.4.9) (Rhodobacter sphaeroides).